The primary structure comprises 608 residues: DNA mismatch repair protein MutL (608 aa).

It belongs to the DNA mismatch repair MutL/HexB family.

In terms of biological role, this protein is involved in the repair of mismatches in DNA. It is required for dam-dependent methyl-directed DNA mismatch repair. May act as a 'molecular matchmaker', a protein that promotes the formation of a stable complex between two or more DNA-binding proteins in an ATP-dependent manner without itself being part of a final effector complex. The chain is DNA mismatch repair protein MutL from Elusimicrobium minutum (strain Pei191).